The primary structure comprises 292 residues: 4-hydroxy-tetrahydrodipicolinate synthase (292 aa).

T45 is a binding site for pyruvate. The active-site Proton donor/acceptor is Y133. K161 serves as the catalytic Schiff-base intermediate with substrate. I203 contacts pyruvate.

The protein belongs to the DapA family. Homotetramer; dimer of dimers.

It localises to the cytoplasm. It catalyses the reaction L-aspartate 4-semialdehyde + pyruvate = (2S,4S)-4-hydroxy-2,3,4,5-tetrahydrodipicolinate + H2O + H(+). The protein operates within amino-acid biosynthesis; L-lysine biosynthesis via DAP pathway; (S)-tetrahydrodipicolinate from L-aspartate: step 3/4. Catalyzes the condensation of (S)-aspartate-beta-semialdehyde [(S)-ASA] and pyruvate to 4-hydroxy-tetrahydrodipicolinate (HTPA). The polypeptide is 4-hydroxy-tetrahydrodipicolinate synthase (Salmonella typhi).